The following is a 272-amino-acid chain: Phosphate import ATP-binding protein PstB 1 (272 aa).

The 242-residue stretch at 26-267 folds into the ABC transporter domain; the sequence is ITIENLDLHY…PMKKQTEDYI (242 aa). 58–65 serves as a coordination point for ATP; it reads GPSGCGKS.

This sequence belongs to the ABC transporter superfamily. Phosphate importer (TC 3.A.1.7) family. The complex is composed of two ATP-binding proteins (PstB), two transmembrane proteins (PstC and PstA) and a solute-binding protein (PstS).

It is found in the cell inner membrane. The catalysed reaction is phosphate(out) + ATP + H2O = ADP + 2 phosphate(in) + H(+). In terms of biological role, part of the ABC transporter complex PstSACB involved in phosphate import. Responsible for energy coupling to the transport system. This chain is Phosphate import ATP-binding protein PstB 1, found in Vibrio vulnificus (strain YJ016).